A 222-amino-acid polypeptide reads, in one-letter code: Large ribosomal subunit protein uL4 (222 aa).

Residues 42–100 (AAGRQGTHSTKTRGEVRGGGKKPYRQKGTGRARQGSVRAPQFTGGGTVHGPKPRDYAQR) form a disordered region. Positions 60–71 (GGKKPYRQKGTG) are enriched in basic residues.

The protein belongs to the universal ribosomal protein uL4 family. As to quaternary structure, part of the 50S ribosomal subunit.

In terms of biological role, one of the primary rRNA binding proteins, this protein initially binds near the 5'-end of the 23S rRNA. It is important during the early stages of 50S assembly. It makes multiple contacts with different domains of the 23S rRNA in the assembled 50S subunit and ribosome. Functionally, forms part of the polypeptide exit tunnel. The polypeptide is Large ribosomal subunit protein uL4 (Thermobifida fusca (strain YX)).